Here is a 244-residue protein sequence, read N- to C-terminus: L-xylulose reductase (244 aa).

Position 1 is an N-acetylmethionine (Met-1). Residue 11-40 (LVTGAGKGIGRGTVQALHATGARVVAVSRT) coordinates NADP(+). Arg-21 carries the post-translational modification Omega-N-methylarginine. At Ser-46 the chain carries Phosphoserine. Residue Ser-136 coordinates substrate. The active-site Proton acceptor is the Tyr-149. Lys-153 contacts NADP(+).

The protein belongs to the short-chain dehydrogenases/reductases (SDR) family. Homotetramer. Highly expressed in kidney, liver and epididymis. In the epididymis, it is mainly expressed in the proximal and distal sections of the corpus region. Weakly or not expressed in brain, lung, heart, spleen and testis.

The protein resides in the membrane. It carries out the reaction xylitol + NADP(+) = L-xylulose + NADPH + H(+). Functionally, catalyzes the NADPH-dependent reduction of several pentoses, tetroses, trioses, alpha-dicarbonyl compounds and L-xylulose. Participates in the uronate cycle of glucose metabolism. May play a role in the water absorption and cellular osmoregulation in the proximal renal tubules by producing xylitol, an osmolyte, thereby preventing osmolytic stress from occurring in the renal tubules. This Homo sapiens (Human) protein is L-xylulose reductase (DCXR).